Reading from the N-terminus, the 74-residue chain is Male-specific sperm protein Mst84Db (74 aa).

This sequence belongs to the MST(3)CGP family. As to expression, testis.

In Drosophila melanogaster (Fruit fly), this protein is Male-specific sperm protein Mst84Db (Mst84Db).